The following is a 475-amino-acid chain: Beta-amyrin 16-alpha-hydroxylase CYP87D16 (475 aa).

A helical membrane pass occupies residues 3–23 (VVGLIGVAVVTILITQYVYKW). Cysteine 423 contacts heme.

This sequence belongs to the cytochrome P450 family. Heme serves as cofactor.

It is found in the membrane. The enzyme catalyses beta-amyrin + reduced [NADPH--hemoprotein reductase] + O2 = 16alpha-hydroxy-beta-amyrin + oxidized [NADPH--hemoprotein reductase] + H2O + H(+). Functionally, involved in the biosynthetic pathway of maesasaponins, which are oleanane-type saponins with diverse biological activities. Catalyzes the C-16alpha oxidation of beta-amyrin to form 16alpha-hydroxy-beta-amyrin. This Maesa lanceolata (False assegai) protein is Beta-amyrin 16-alpha-hydroxylase CYP87D16.